A 156-amino-acid polypeptide reads, in one-letter code: Small ribosomal subunit protein uS7 (156 aa).

The protein belongs to the universal ribosomal protein uS7 family. Part of the 30S ribosomal subunit. Contacts proteins S9 and S11.

Its function is as follows. One of the primary rRNA binding proteins, it binds directly to 16S rRNA where it nucleates assembly of the head domain of the 30S subunit. Is located at the subunit interface close to the decoding center, probably blocks exit of the E-site tRNA. This chain is Small ribosomal subunit protein uS7, found in Nitrobacter winogradskyi (strain ATCC 25391 / DSM 10237 / CIP 104748 / NCIMB 11846 / Nb-255).